We begin with the raw amino-acid sequence, 313 residues long: MHDTFKHTTVLLDEAVNGLNIKSDGIYIDGTFGRGGHSRLILSQLGEHGRLYAIDRDPQAIAAAAEITDPRFTIIHGPFSALAEYAEERGLKGKIDGILLDLGVSSPQLDDAERGFSFMRDGPLDMRMDPTRGQSAAEWLLKAEESDIAFVLKTFGEERFAKRIARAIVERNREQPMTRTKELADVIYAATPVKDKFKHPATRSFQAIRIWVNSELEEIEQALKGALSALTAGGRLSIISFHSLEDRIVKRFMREQSRGPQIPHGLPMTEAQLSSLGGRQLKALGKMMPGESEVADNPRARSSVLRIAERTAS.

S-adenosyl-L-methionine-binding positions include 35-37 (GGH), D55, F79, D101, and Q108.

The protein belongs to the methyltransferase superfamily. RsmH family.

The protein localises to the cytoplasm. It carries out the reaction cytidine(1402) in 16S rRNA + S-adenosyl-L-methionine = N(4)-methylcytidine(1402) in 16S rRNA + S-adenosyl-L-homocysteine + H(+). Functionally, specifically methylates the N4 position of cytidine in position 1402 (C1402) of 16S rRNA. The sequence is that of Ribosomal RNA small subunit methyltransferase H from Erwinia tasmaniensis (strain DSM 17950 / CFBP 7177 / CIP 109463 / NCPPB 4357 / Et1/99).